The chain runs to 186 residues: Phosphoheptose isomerase (186 aa).

Positions 33 to 186 constitute an SIS domain; the sequence is LCECLKKGGK…TLCQIIDEGF (154 aa). 48–50 contributes to the substrate binding site; that stretch reads NGG. Positions 57 and 61 each coordinate Zn(2+). Residues Glu61, 90–91, 116–118, Ser121, and Gln168 contribute to the substrate site; these read ND and STS. Zn(2+) contacts are provided by Gln168 and His176.

Belongs to the SIS family. GmhA subfamily. Homotetramer. Zn(2+) serves as cofactor.

It localises to the cytoplasm. The catalysed reaction is 2 D-sedoheptulose 7-phosphate = D-glycero-alpha-D-manno-heptose 7-phosphate + D-glycero-beta-D-manno-heptose 7-phosphate. It functions in the pathway carbohydrate biosynthesis; D-glycero-D-manno-heptose 7-phosphate biosynthesis; D-glycero-alpha-D-manno-heptose 7-phosphate and D-glycero-beta-D-manno-heptose 7-phosphate from sedoheptulose 7-phosphate: step 1/1. Its function is as follows. Catalyzes the isomerization of sedoheptulose 7-phosphate in D-glycero-D-manno-heptose 7-phosphate. The polypeptide is Phosphoheptose isomerase (Campylobacter jejuni subsp. jejuni serotype O:6 (strain 81116 / NCTC 11828)).